An 842-amino-acid chain; its full sequence is MDIRKAYLDFFASKGHEITPSSPLVPDDATLLFTNAGMVPFKSIFTGEIPRPNPPRKTSCQTCIRAGGKHNDLDNVGYTARHHTFFEMLGNFSFGDYFKEQAIAYAWEFVTEFLKLPKDRLYVTVHENDDEAFNLWQKHIQKERIYKFGDKDNFWQMGDTGPCGPCSEIFYDQGEEHFNSSEDYMGGDGDRFLEIWNLVFMQYERSADGVLSPLPKPSIDTGMGLERVTAIKEGKFSNFDSSLFMPIINEISKLCNKTYIYESGASFRVIADHIRSSVFLLAQGVSFDKEGRGYVLRRILRRALRHGYLLGFKQAFMYKLVDVVCDLMGGHYTYLNEKKDFIKEQIRLEEERFLSTIENGIEIFNEELKNTKEIFSGEVAFKLYDTYGFPLDLTADMLREKNLKVDEEKFELLMNEQKARAKASWKGSGDKTASGDFKNLLEKFGENHFVGYEKAECESKILALLDEDFKEVSTLKDAGWVMLKNTPFYATSGGQSADSGFMAKREVLDTQKFFNLNLSFVKAGEELKVGDIVHARIDTEKREQIARHHSATHLLHHALREILGSHVSQAGSLVESNKLRFDFTHHKALSKEELENIEKRVNEMIINSSEAILENMPLEEAKKSGAIALFNEKYQGNVRVLTLGESKELCGGTHVKNTAQIGSFYIVKESGVSAGVRRIEAVVSKAALEFVKNQLEELSKVKDELKNNDILSGIKKLKNEILSLKNELKNSSKTELDSKNIQGVEICVKRIDNGDIKAMIDDFKNKFAKAVILLIQVKDEKITLAAGVKDVPLKAGALVKEAAQILGGNGGGRDDFATAGGKDLSKINEALKQSLETIEKAL.

Residues H549, H553, C650, and H654 each coordinate Zn(2+).

The protein belongs to the class-II aminoacyl-tRNA synthetase family. It depends on Zn(2+) as a cofactor.

Its subcellular location is the cytoplasm. It carries out the reaction tRNA(Ala) + L-alanine + ATP = L-alanyl-tRNA(Ala) + AMP + diphosphate. Its function is as follows. Catalyzes the attachment of alanine to tRNA(Ala) in a two-step reaction: alanine is first activated by ATP to form Ala-AMP and then transferred to the acceptor end of tRNA(Ala). Also edits incorrectly charged Ser-tRNA(Ala) and Gly-tRNA(Ala) via its editing domain. The protein is Alanine--tRNA ligase of Campylobacter jejuni subsp. jejuni serotype O:6 (strain 81116 / NCTC 11828).